The primary structure comprises 391 residues: Homoserine O-acetyltransferase (391 aa).

The AB hydrolase-1 domain maps to 50–360; the sequence is NAILICHALT…DKGHDAFLLD (311 aa). The active-site Nucleophile is the serine 155. Arginine 225 contacts substrate. Catalysis depends on residues aspartate 321 and histidine 354. Substrate is bound at residue aspartate 355.

Belongs to the AB hydrolase superfamily. MetX family. As to quaternary structure, homodimer.

Its subcellular location is the cytoplasm. It catalyses the reaction L-homoserine + acetyl-CoA = O-acetyl-L-homoserine + CoA. The protein operates within amino-acid biosynthesis; L-methionine biosynthesis via de novo pathway; O-acetyl-L-homoserine from L-homoserine: step 1/1. In terms of biological role, transfers an acetyl group from acetyl-CoA to L-homoserine, forming acetyl-L-homoserine. The chain is Homoserine O-acetyltransferase from Rhodospirillum rubrum (strain ATCC 11170 / ATH 1.1.1 / DSM 467 / LMG 4362 / NCIMB 8255 / S1).